The sequence spans 396 residues: Lipopolysaccharide assembly protein B (396 aa).

Residues 1-20 (MIELLFLLLPIAAAYGWYMG) traverse the membrane as a helical segment. Over 21-396 (RRSAKKDQDD…IKPVSNQEHN (376 aa)) the chain is Cytoplasmic. TPR repeat units follow at residues 35–68 (LSRDYVTGVNFLLSNQTDKAVDLFLDMLQKQEIE), 77–109 (FEAELTLGNLFRSRGEVDRALRIHQALDLSPNY), 149–182 (ENALQQLLVIYQKTKEWKKAVNIAEKLAKIKPQE), and 221–254 (VRASLLLANLAMLDGQYQQAVKILENVLEQNPDY). Fe cation contacts are provided by cysteine 364, cysteine 367, cysteine 378, and cysteine 381.

This sequence belongs to the LapB family.

The protein localises to the cell inner membrane. Its function is as follows. Modulates cellular lipopolysaccharide (LPS) levels by regulating LpxC, which is involved in lipid A biosynthesis. May act by modulating the proteolytic activity of FtsH towards LpxC. May also coordinate assembly of proteins involved in LPS synthesis at the plasma membrane. This is Lipopolysaccharide assembly protein B from Haemophilus influenzae (strain ATCC 51907 / DSM 11121 / KW20 / Rd).